We begin with the raw amino-acid sequence, 568 residues long: AT-rich interactive domain-containing protein 3B (568 aa).

Residue M1 is modified to N-acetylmethionine. Residues 1–22 are compositionally biased toward low complexity; that stretch reads MEPLQQQQQQQQQKQPQQPLLQ. The segment at 1-174 is disordered; that stretch reads MEPLQQQQQQ…SVPTAGQPSW (174 aa). S87 is subject to Phosphoserine. The span at 88-107 shows a compositional bias: acidic residues; the sequence is EPEEEEGGLEDEDGDDDVAE. Residues 151-160 are compositionally biased toward basic and acidic residues; the sequence is TKEDHTKDAS. Residues 201–374 form an interaction with RB1 region; sequence SRDFAKLYEL…SSPKIRFSIL (174 aa). Positions 213 to 305 constitute an ARID domain; the sequence is DPERKEFLDD…YLYAYECEKK (93 aa). S309 carries the post-translational modification Phosphoserine. R370 carries the post-translational modification Asymmetric dimethylarginine. Positions 378–403 are disordered; that stretch reads SSSGTSASSPRIPPASTLRKGDGVPV. The 98-residue stretch at 425–522 folds into the REKLES domain; sequence GPLEHLRERL…GVLFAQKPVV (98 aa). Residues 495–518 are interaction with ARID3A; sequence SNIGSINMSVDIDGTTYTGVLFAQ. Residues 529-559 show a composition bias toward low complexity; sequence TPQSIGSSASSSNSSSSHCSPSPTSSRGTPS. A disordered region spans residues 529–568; that stretch reads TPQSIGSSASSSNSSSSHCSPSPTSSRGTPSAEPSTSWSL.

As to quaternary structure, heterodimer with ARID3A. Interacts with unphosphorylated RB1. In terms of tissue distribution, expressed at high levels in testis. Also expressed in prostate, thyroid and thymus.

It is found in the nucleus. Its function is as follows. Transcription factor involved in the production of cranial mesenchymal tissues. Favors nuclear targeting of ARID3A. This chain is AT-rich interactive domain-containing protein 3B (Arid3b), found in Mus musculus (Mouse).